Consider the following 244-residue polypeptide: Cobalt transport protein CbiM (244 aa).

The N-terminal stretch at 1-27 is a signal peptide; it reads MVEGMLKTNFRLLFLLIFLLIPTPVLA. 6 helical membrane passes run 36–56, 65–85, 102–122, 134–154, 168–188, and 196–216; these read PVKW…VGFI, GPGA…LSAL, LAAI…VLIF, TLGA…YGVY, IFLA…VQLA, and LFLS…PLAI.

This sequence belongs to the CbiM family. Forms an energy-coupling factor (ECF) transporter complex composed of an ATP-binding protein (A component, CbiO), a transmembrane protein (T component, CbiQ) and 2 possible substrate-capture proteins (S components, CbiM and CbiN) of unknown stoichimetry.

It localises to the cell membrane. It functions in the pathway cofactor biosynthesis; adenosylcobalamin biosynthesis. Functionally, part of the energy-coupling factor (ECF) transporter complex CbiMNOQ involved in cobalt import. The protein is Cobalt transport protein CbiM of Carboxydothermus hydrogenoformans (strain ATCC BAA-161 / DSM 6008 / Z-2901).